A 582-amino-acid polypeptide reads, in one-letter code: ATP-dependent lipid A-core flippase (582 aa).

Transmembrane regions (helical) follow at residues Leu-16 to Leu-36, Val-63 to Tyr-83, Ile-153 to Val-173, Pro-253 to Pro-273, and Val-275 to Met-295. Residues Ile-28–Arg-310 enclose the ABC transmembrane type-1 domain. Residues Val-342–Met-578 enclose the ABC transporter domain. Gly-376 to Ser-383 is a binding site for ATP.

The protein belongs to the ABC transporter superfamily. Lipid exporter (TC 3.A.1.106) family. In terms of assembly, homodimer.

It is found in the cell inner membrane. The enzyme catalyses ATP + H2O + lipid A-core oligosaccharideSide 1 = ADP + phosphate + lipid A-core oligosaccharideSide 2.. Involved in lipopolysaccharide (LPS) biosynthesis. Translocates lipid A-core from the inner to the outer leaflet of the inner membrane. Transmembrane domains (TMD) form a pore in the inner membrane and the ATP-binding domain (NBD) is responsible for energy generation. The polypeptide is ATP-dependent lipid A-core flippase (Shigella flexneri).